The following is a 367-amino-acid chain: UDP-N-acetylglucosamine--N-acetylmuramyl-(pentapeptide) pyrophosphoryl-undecaprenol N-acetylglucosamine transferase (367 aa).

Residues 15-17, asparagine 127, arginine 163, serine 191, isoleucine 249, and glutamine 294 contribute to the UDP-N-acetyl-alpha-D-glucosamine site; that span reads TGG.

The protein belongs to the glycosyltransferase 28 family. MurG subfamily.

Its subcellular location is the cell inner membrane. It carries out the reaction di-trans,octa-cis-undecaprenyl diphospho-N-acetyl-alpha-D-muramoyl-L-alanyl-D-glutamyl-meso-2,6-diaminopimeloyl-D-alanyl-D-alanine + UDP-N-acetyl-alpha-D-glucosamine = di-trans,octa-cis-undecaprenyl diphospho-[N-acetyl-alpha-D-glucosaminyl-(1-&gt;4)]-N-acetyl-alpha-D-muramoyl-L-alanyl-D-glutamyl-meso-2,6-diaminopimeloyl-D-alanyl-D-alanine + UDP + H(+). It participates in cell wall biogenesis; peptidoglycan biosynthesis. Cell wall formation. Catalyzes the transfer of a GlcNAc subunit on undecaprenyl-pyrophosphoryl-MurNAc-pentapeptide (lipid intermediate I) to form undecaprenyl-pyrophosphoryl-MurNAc-(pentapeptide)GlcNAc (lipid intermediate II). The sequence is that of UDP-N-acetylglucosamine--N-acetylmuramyl-(pentapeptide) pyrophosphoryl-undecaprenol N-acetylglucosamine transferase from Burkholderia mallei (strain NCTC 10247).